The primary structure comprises 92 residues: Neurophysin 2 (92 aa).

Disulfide bonds link cysteine 7–cysteine 51, cysteine 10–cysteine 24, cysteine 18–cysteine 41, cysteine 25–cysteine 31, cysteine 58–cysteine 70, cysteine 64–cysteine 82, and cysteine 71–cysteine 76.

The protein belongs to the vasopressin/oxytocin family.

It is found in the secreted. Neurophysin 2 specifically binds the midbrain peptide hormone vasopressin. This Equus caballus (Horse) protein is Neurophysin 2 (AVP).